The sequence spans 156 residues: Transcription inhibitor protein Gfh1 (156 aa).

A coiled-coil region spans residues 1–74; sequence MAREVKLTKA…LEDILSRAVI (74 aa). Glutamate 20 and glutamate 24 together coordinate Zn(2+).

This sequence belongs to the GreA/GreB family. As to quaternary structure, interacts with RNAP.

Inhibits all catalytic activities of RNA polymerase (RNAP) by partially occluding its substrate-binding site and preventing NTP binding. This is Transcription inhibitor protein Gfh1 (gfh1) from Thermus thermophilus (strain ATCC 27634 / DSM 579 / HB8).